Consider the following 422-residue polypeptide: S100P-binding protein (422 aa).

Disordered regions lie at residues 1–28 (MMCSLVPSEQSSGTSLLPKDNAPFSWSS), 61–135 (LKDD…TPAK), and 170–292 (YVSE…DSGK). Residues 80–90 (DDSRNVEKGEK) show a composition bias toward basic and acidic residues. Position 195 is a phosphoserine (serine 195). The span at 231–241 (VSDKNMSDSKK) shows a compositional bias: basic and acidic residues. Polar residues predominate over residues 255–269 (TPNTGSSRRNGSYKS). The segment covering 274–283 (KLPVSSSSSK) has biased composition (low complexity).

Interacts with S100P.

It localises to the nucleus. This is S100P-binding protein from Bos taurus (Bovine).